The following is a 910-amino-acid chain: Putative disease resistance protein At1g58400 (910 aa).

Positions 15–57 form a coiled coil; it reads DRLTQEYEQFQGVEDRIAELKSNLNLLKSFLKDAEAKKNTSQM. One can recognise an NB-ARC domain in the interval 148-460; it reads REREMRQTFS…AEGILEPRHY (313 aa). 191 to 198 is a binding site for ATP; that stretch reads GMGGLGKT. LRR repeat units lie at residues 580-604 and 605-628; these read LELL…GIGK and LIHL…LGNL.

It belongs to the disease resistance NB-LRR family.

Its function is as follows. Potential disease resistance protein. The polypeptide is Putative disease resistance protein At1g58400 (Arabidopsis thaliana (Mouse-ear cress)).